The following is a 130-amino-acid chain: Small ribosomal subunit protein uS11 (130 aa).

Basic residues predominate over residues 1 to 15 (MARPTKKSGPRKQKR). The tract at residues 1 to 21 (MARPTKKSGPRKQKRNVPSGV) is disordered.

It belongs to the universal ribosomal protein uS11 family. As to quaternary structure, part of the 30S ribosomal subunit. Interacts with proteins S7 and S18. Binds to IF-3.

Its function is as follows. Located on the platform of the 30S subunit, it bridges several disparate RNA helices of the 16S rRNA. Forms part of the Shine-Dalgarno cleft in the 70S ribosome. The polypeptide is Small ribosomal subunit protein uS11 (Synechococcus elongatus (strain ATCC 33912 / PCC 7942 / FACHB-805) (Anacystis nidulans R2)).